Here is a 201-residue protein sequence, read N- to C-terminus: Protein CIMAP1C (201 aa).

Residues 171–186 (PAPTMSSRSGHTSPAR) form an STPGR repeat. The interval 172 to 201 (APTMSSRSGHTSPARLLSPWASSTRPTYAR) is disordered. The span at 191–201 (WASSTRPTYAR) shows a compositional bias: polar residues.

Belongs to the CIMAP family.

This chain is Protein CIMAP1C (CIMAP1C), found in Bos taurus (Bovine).